The sequence spans 141 residues: MMGFVKKIRDFFDLDEEKWEEDEYEQEEVAQQPKVEQKQNVVSLQSVQKSSKLVLFEPRAYAEVQEIADHLKNRRAVVVNVHRVDRDQARRIVDFLSGTVYAIGGDIQQVGSTIFLCTPDNVDVSGSISIVSDDEPTIKRW.

It belongs to the SepF family. As to quaternary structure, homodimer. Interacts with FtsZ.

It is found in the cytoplasm. In terms of biological role, cell division protein that is part of the divisome complex and is recruited early to the Z-ring. Probably stimulates Z-ring formation, perhaps through the cross-linking of FtsZ protofilaments. Its function overlaps with FtsA. The protein is Cell division protein SepF of Anoxybacillus flavithermus (strain DSM 21510 / WK1).